The sequence spans 372 residues: Cyclin-A3-2 (372 aa).

Positions Asn53–Ile73 are disordered.

It belongs to the cyclin family. Cyclin AB subfamily.

This chain is Cyclin-A3-2 (CYCA3-2), found in Arabidopsis thaliana (Mouse-ear cress).